We begin with the raw amino-acid sequence, 392 residues long: Iron-sulfur cluster assembly SufBD family protein ML0594 (392 aa).

The protein belongs to the iron-sulfur cluster assembly SufBD family.

The chain is Iron-sulfur cluster assembly SufBD family protein ML0594 from Mycobacterium leprae (strain TN).